Reading from the N-terminus, the 393-residue chain is Elongation factor Tu (393 aa).

One can recognise a tr-type G domain in the interval 10–203; the sequence is KPHVNIGTIG…AVDDYIPEPV (194 aa). Residues 19 to 26 are G1; that stretch reads GHVDHGKT. Position 19 to 26 (19 to 26) interacts with GTP; that stretch reads GHVDHGKT. Residue threonine 26 participates in Mg(2+) binding. Residues 60–64 form a G2 region; it reads GITIS. The G3 stretch occupies residues 81–84; sequence DCPG. Residues 81–85 and 136–139 each bind GTP; these read DCPGH and NKVD. The G4 stretch occupies residues 136–139; that stretch reads NKVD. The segment at 173–175 is G5; that stretch reads SAL.

This sequence belongs to the TRAFAC class translation factor GTPase superfamily. Classic translation factor GTPase family. EF-Tu/EF-1A subfamily. Monomer.

The protein localises to the cytoplasm. The enzyme catalyses GTP + H2O = GDP + phosphate + H(+). In terms of biological role, GTP hydrolase that promotes the GTP-dependent binding of aminoacyl-tRNA to the A-site of ribosomes during protein biosynthesis. This Chlorobium phaeobacteroides (strain BS1) protein is Elongation factor Tu.